A 337-amino-acid polypeptide reads, in one-letter code: Large ribosomal subunit protein uL3 (337 aa).

The disordered stretch occupies residues 1 to 32 (MAKGHRPRRGSLAYSPRKRSQSHIPRFRSWPE).

It belongs to the universal ribosomal protein uL3 family. As to quaternary structure, part of the 50S ribosomal subunit. Forms a cluster with proteins L14 and L24e.

Its function is as follows. One of the primary rRNA binding proteins, it binds directly near the 3'-end of the 23S rRNA, where it nucleates assembly of the 50S subunit. This chain is Large ribosomal subunit protein uL3, found in Methanococcoides burtonii (strain DSM 6242 / NBRC 107633 / OCM 468 / ACE-M).